We begin with the raw amino-acid sequence, 75 residues long: MKSDKVLDAKGLACPMPIVRTKKAMNELESGQILEVHATDKGAKNDLTAWSKSGGHDLLEQTDEGDILKFWIQKG.

Cysteine 14 serves as the catalytic Cysteine persulfide intermediate.

The protein belongs to the sulfur carrier protein TusA family.

The sequence is that of Putative sulfur carrier protein YrkI (yrkI) from Bacillus subtilis (strain 168).